The chain runs to 297 residues: ATP phosphoribosyltransferase (297 aa).

Met1 is modified (N-acetylmethionine).

The protein belongs to the ATP phosphoribosyltransferase family.

The protein localises to the cytoplasm. It catalyses the reaction 1-(5-phospho-beta-D-ribosyl)-ATP + diphosphate = 5-phospho-alpha-D-ribose 1-diphosphate + ATP. It functions in the pathway amino-acid biosynthesis; L-histidine biosynthesis; L-histidine from 5-phospho-alpha-D-ribose 1-diphosphate: step 1/9. Its function is as follows. Catalyzes the condensation of ATP and 5-phosphoribose 1-diphosphate to form N'-(5'-phosphoribosyl)-ATP (PR-ATP). Has a crucial role in the pathway because the rate of histidine biosynthesis seems to be controlled primarily by regulation of the enzymatic activity. The chain is ATP phosphoribosyltransferase (HIS1) from Saccharomyces cerevisiae (strain ATCC 204508 / S288c) (Baker's yeast).